Here is a 181-residue protein sequence, read N- to C-terminus: Ribosome maturation factor RimM (181 aa).

One can recognise a PRC barrel domain in the interval 98 to 172 (EDEFYFEDLI…RIVIPELSLW (75 aa)).

It belongs to the RimM family. As to quaternary structure, binds ribosomal protein uS19.

It localises to the cytoplasm. In terms of biological role, an accessory protein needed during the final step in the assembly of 30S ribosomal subunit, possibly for assembly of the head region. Essential for efficient processing of 16S rRNA. May be needed both before and after RbfA during the maturation of 16S rRNA. It has affinity for free ribosomal 30S subunits but not for 70S ribosomes. The protein is Ribosome maturation factor RimM of Hyphomonas neptunium (strain ATCC 15444).